A 302-amino-acid chain; its full sequence is Intermediate capsid protein VP8 (302 aa).

Its subcellular location is the virion. Self assembles to form an icosahedral capsid with a T=13 symmetry, which consists of 230 trimers, with channels at each of its five-fold vertices. The protein is Intermediate capsid protein VP8 (Segment-8) of Banna virus (BAV).